Here is a 375-residue protein sequence, read N- to C-terminus: Putative type I specificity subunit S.MpnORF638P (375 aa).

It belongs to the type-I restriction system S methylase family. In terms of assembly, the methyltransferase is composed of M and S polypeptides.

Its function is as follows. The specificity (S) subunit of a type I methyltransferase (MTase); this subunit dictates DNA sequence specificity. The single R subunit has multiple frameshifts and is probably not expressed. This Mycoplasma pneumoniae (strain ATCC 29342 / M129 / Subtype 1) (Mycoplasmoides pneumoniae) protein is Putative type I specificity subunit S.MpnORF638P.